Consider the following 546-residue polypeptide: Low-affinity methionine permease (546 aa).

The Extracellular segment spans residues 1–70 (MEPLLFNSGK…QGRHLGVFST (70 aa)). The chain crosses the membrane as a helical span at residues 71-91 (VVLFVSRIMGSGIFAVPSVIL). Residues 92-98 (LNTGGNK) are Cytoplasmic-facing. The chain crosses the membrane as a helical span at residues 99 to 119 (LIYFAIWVFSAAIAFAGLYLF). The Extracellular portion of the chain corresponds to 120 to 148 (LEFGSWIPKSGGRKNFLERSFERPRLLIS). Residues 149–169 (VVFSCYSVLTGYALTGSIVFG) traverse the membrane as a helical segment. The Cytoplasmic segment spans residues 170–188 (KYVLSAFGVTDDSWSKYVS). Residues 189–209 (ISFIIFAVLIHGVSVRHGVFI) traverse the membrane as a helical segment. Residues 210 to 213 (QNAL) lie on the Extracellular side of the membrane. A helical membrane pass occupies residues 214–234 (GGLKLIMIVLMCFAGLYTLFF). The Cytoplasmic portion of the chain corresponds to 235-254 (YKSTGQVAWDLPVTQVEKDS). Residues 255–275 (LLSVSSIATAFISSFFCFSGW) form a helical membrane-spanning segment. Residues 276–297 (DTVHTVTSEIKNPVKTLKVSGP) lie on the Extracellular side of the membrane. A helical transmembrane segment spans residues 298–318 (LSLIICFVCYTMMNVAYLKVL). Position 319 (T319) is a topological domain, cytoplasmic. A helical membrane pass occupies residues 320 to 340 (YEEIVSAGPLVGSVLFTKLFG). Residues 341–346 (PRVGGK) are Extracellular-facing. The chain crosses the membrane as a helical span at residues 347-367 (FIAFSIAISAASNILVVIYSI). The Cytoplasmic segment spans residues 368–393 (SRVNQEIFKEGYLPFSIHMSKNWPFD). Residues 394-414 (APLPSISLCGFITIAWILILP) form a helical membrane-spanning segment. Over 415 to 423 (KEGESFNYL) the chain is Extracellular. The chain crosses the membrane as a helical span at residues 424–444 (VSMDGYGNQFFLLLVAIGLFI). The Cytoplasmic portion of the chain corresponds to 445–459 (WRFKHKNEVPEIRAS). A helical membrane pass occupies residues 460–480 (TFGVLAIITLSLYMLMAPFFA). Residues 481-494 (DPSLNRVGFLPPYQ) lie on the Extracellular side of the membrane. A helical transmembrane segment spans residues 495-515 (IMSLLVIVACFFFWLVKFVLL). Residues 516–546 (PKFFHYKLLPKITYLHDGLIVTEWVKKPCLC) are Cytoplasmic-facing.

To yeast high affinity methionine permease (MUP1).

The protein localises to the membrane. Functionally, very low affinity permease for methionine. In Saccharomyces cerevisiae (strain ATCC 204508 / S288c) (Baker's yeast), this protein is Low-affinity methionine permease (MUP3).